Here is a 337-residue protein sequence, read N- to C-terminus: GTPase Obg (337 aa).

In terms of domain architecture, Obg spans 1–159 (MDFIDEVKLY…RNIVLKLKVL (159 aa)). In terms of domain architecture, OBG-type G spans 160–329 (SDVGIIGMPN…LNEKVKTKEI (170 aa)). Residues 166-173 (GMPNVGKS), 191-195 (FTTIR), 212-215 (DIPG), 279-282 (NKCD), and 310-312 (DDD) contribute to the GTP site. S173 and T193 together coordinate Mg(2+).

This sequence belongs to the TRAFAC class OBG-HflX-like GTPase superfamily. OBG GTPase family. As to quaternary structure, monomer. Requires Mg(2+) as cofactor.

The protein resides in the cytoplasm. An essential GTPase which binds GTP, GDP and possibly (p)ppGpp with moderate affinity, with high nucleotide exchange rates and a fairly low GTP hydrolysis rate. Plays a role in control of the cell cycle, stress response, ribosome biogenesis and in those bacteria that undergo differentiation, in morphogenesis control. The protein is GTPase Obg of Wolbachia pipientis subsp. Culex pipiens (strain wPip).